The sequence spans 495 residues: Telomere-binding protein subunit alpha (495 aa).

Positions 1 to 13 (MSTAAKQNRSTSR) are enriched in polar residues. The interval 1 to 31 (MSTAAKQNRSTSRVSKKKTAAPKEGAAKKSD) is disordered.

It belongs to the telombin family. As to quaternary structure, heterodimer of an alpha and a beta subunit.

It localises to the nucleus. The protein resides in the chromosome. Its subcellular location is the telomere. Its function is as follows. May function as protective capping of the single-stranded telomeric overhang. May also participate in telomere length regulation during DNA replication. Binds specifically to the T4G4-containing extension on the 3'strand and protects this region of the telomere from nuclease digestion and chemical modification. This is Telomere-binding protein subunit alpha (MAC-56A) from Sterkiella nova (Ciliate).